Reading from the N-terminus, the 319-residue chain is ATP-dependent 6-phosphofructokinase (319 aa).

Gly-11 serves as a coordination point for ATP. 21-25 (RAVVR) provides a ligand contact to ADP. ATP is bound by residues 72-73 (RY) and 102-105 (GDGS). Asp-103 contacts Mg(2+). 125-127 (TID) serves as a coordination point for substrate. Asp-127 (proton acceptor) is an active-site residue. Residue Arg-154 participates in ADP binding. Substrate contacts are provided by residues Arg-162 and 169–171 (MGR). ADP contacts are provided by residues 185–187 (GAE), Arg-211, and 213–215 (KKH). Residues Glu-222, Arg-243, and 249 to 252 (HVQR) contribute to the substrate site.

This sequence belongs to the phosphofructokinase type A (PFKA) family. ATP-dependent PFK group I subfamily. Prokaryotic clade 'B1' sub-subfamily. In terms of assembly, homotetramer. The cofactor is Mg(2+).

The protein resides in the cytoplasm. It catalyses the reaction beta-D-fructose 6-phosphate + ATP = beta-D-fructose 1,6-bisphosphate + ADP + H(+). The protein operates within carbohydrate degradation; glycolysis; D-glyceraldehyde 3-phosphate and glycerone phosphate from D-glucose: step 3/4. With respect to regulation, allosterically activated by ADP and other diphosphonucleosides, and allosterically inhibited by phosphoenolpyruvate. Its function is as follows. Catalyzes the phosphorylation of D-fructose 6-phosphate to fructose 1,6-bisphosphate by ATP, the first committing step of glycolysis. In Listeria welshimeri serovar 6b (strain ATCC 35897 / DSM 20650 / CCUG 15529 / CIP 8149 / NCTC 11857 / SLCC 5334 / V8), this protein is ATP-dependent 6-phosphofructokinase.